The following is a 387-amino-acid chain: 8-amino-7-oxononanoate synthase (387 aa).

2 residues coordinate substrate: Arg-31 and Arg-38. 118–119 (GY) is a binding site for pyridoxal 5'-phosphate. His-143 contacts substrate. Pyridoxal 5'-phosphate-binding positions include Ser-191, 216-219 (DDAH), and 236-239 (TLSK). Residue Lys-239 is modified to N6-(pyridoxal phosphate)lysine. Thr-348 is a substrate binding site.

Belongs to the class-II pyridoxal-phosphate-dependent aminotransferase family. BioF subfamily. Homodimer. Requires pyridoxal 5'-phosphate as cofactor.

It catalyses the reaction 6-carboxyhexanoyl-[ACP] + L-alanine + H(+) = (8S)-8-amino-7-oxononanoate + holo-[ACP] + CO2. It participates in cofactor biosynthesis; biotin biosynthesis. Functionally, catalyzes the decarboxylative condensation of pimeloyl-[acyl-carrier protein] and L-alanine to produce 8-amino-7-oxononanoate (AON), [acyl-carrier protein], and carbon dioxide. The sequence is that of 8-amino-7-oxononanoate synthase from Methylorubrum populi (strain ATCC BAA-705 / NCIMB 13946 / BJ001) (Methylobacterium populi).